We begin with the raw amino-acid sequence, 442 residues long: D-serine dehydratase (442 aa).

K118 is modified (N6-(pyridoxal phosphate)lysine).

This sequence belongs to the serine/threonine dehydratase family. DsdA subfamily. In terms of assembly, monomer. It depends on pyridoxal 5'-phosphate as a cofactor.

The catalysed reaction is D-serine = pyruvate + NH4(+). The chain is D-serine dehydratase from Escherichia coli (strain K12 / MC4100 / BW2952).